Consider the following 100-residue polypeptide: Urease subunit gamma (100 aa).

This sequence belongs to the urease gamma subunit family. As to quaternary structure, heterotrimer of UreA (gamma), UreB (beta) and UreC (alpha) subunits. Three heterotrimers associate to form the active enzyme.

Its subcellular location is the cytoplasm. It carries out the reaction urea + 2 H2O + H(+) = hydrogencarbonate + 2 NH4(+). It participates in nitrogen metabolism; urea degradation; CO(2) and NH(3) from urea (urease route): step 1/1. The protein is Urease subunit gamma of Azotobacter vinelandii (strain DJ / ATCC BAA-1303).